A 246-amino-acid polypeptide reads, in one-letter code: 3-oxoacyl-[acyl-carrier-protein] reductase FabG (246 aa).

NADP(+) contacts are provided by residues 11–14 (GASR), 62–63 (NV), and Asn89. Substrate is bound at residue Ser141. The active-site Proton acceptor is the Tyr154. Residues 154 to 158 (YVATK) and Ile187 each bind NADP(+).

This sequence belongs to the short-chain dehydrogenases/reductases (SDR) family. Homotetramer.

It catalyses the reaction a (3R)-hydroxyacyl-[ACP] + NADP(+) = a 3-oxoacyl-[ACP] + NADPH + H(+). It participates in lipid metabolism; fatty acid biosynthesis. Catalyzes the NADPH-dependent reduction of beta-ketoacyl-ACP substrates to beta-hydroxyacyl-ACP products, the first reductive step in the elongation cycle of fatty acid biosynthesis. The sequence is that of 3-oxoacyl-[acyl-carrier-protein] reductase FabG (fabG) from Staphylococcus aureus (strain Mu50 / ATCC 700699).